A 128-amino-acid chain; its full sequence is AECKVDVDSTDQMSFNTKEITIDKSCKTFTVNLTHSGSLPKNVMGHNWVLSKSADMAGIATDGMAAGIDKDYLKPGDSRVIAHTKIIGSGEKDSVTFDVSKLTAGESYEFFCSFPGHNSMMKGAVVLK.

The 128-residue stretch at 1–128 folds into the Plastocyanin-like domain; it reads AECKVDVDST…SMMKGAVVLK (128 aa). A disulfide bridge connects residues Cys-3 and Cys-26. 4 residues coordinate Cu cation: His-46, Cys-112, His-117, and Met-121.

The protein localises to the periplasm. Transfers electrons from cytochrome c551 to cytochrome oxidase. This Pseudomonas chlororaphis (Pseudomonas aureofaciens) protein is Azurin.